The sequence spans 72 residues: UPF0154 protein LBA1278 (72 aa).

A helical transmembrane segment spans residues 3–23 (LGLAIFLIIIALLVGATAGFY).

This sequence belongs to the UPF0154 family.

The protein localises to the cell membrane. The protein is UPF0154 protein LBA1278 of Lactobacillus acidophilus (strain ATCC 700396 / NCK56 / N2 / NCFM).